Consider the following 65-residue polypeptide: Small ribosomal subunit protein bS21 (65 aa).

Belongs to the bacterial ribosomal protein bS21 family.

This Chlorobaculum parvum (strain DSM 263 / NCIMB 8327) (Chlorobium vibrioforme subsp. thiosulfatophilum) protein is Small ribosomal subunit protein bS21.